Here is a 343-residue protein sequence, read N- to C-terminus: Heat-inducible transcription repressor HrcA (343 aa).

It belongs to the HrcA family.

Its function is as follows. Negative regulator of class I heat shock genes (grpE-dnaK-dnaJ and groELS operons). Prevents heat-shock induction of these operons. This chain is Heat-inducible transcription repressor HrcA, found in Mycolicibacterium smegmatis (strain ATCC 700084 / mc(2)155) (Mycobacterium smegmatis).